A 401-amino-acid polypeptide reads, in one-letter code: Exodeoxyribonuclease 7 large subunit (401 aa).

Belongs to the XseA family. As to quaternary structure, heterooligomer composed of large and small subunits.

The protein resides in the cytoplasm. The catalysed reaction is Exonucleolytic cleavage in either 5'- to 3'- or 3'- to 5'-direction to yield nucleoside 5'-phosphates.. In terms of biological role, bidirectionally degrades single-stranded DNA into large acid-insoluble oligonucleotides, which are then degraded further into small acid-soluble oligonucleotides. This chain is Exodeoxyribonuclease 7 large subunit, found in Syntrophotalea carbinolica (strain DSM 2380 / NBRC 103641 / GraBd1) (Pelobacter carbinolicus).